The primary structure comprises 166 residues: Transcription elongation factor GreA (166 aa).

This sequence belongs to the GreA/GreB family.

In terms of biological role, necessary for efficient RNA polymerase transcription elongation past template-encoded arresting sites. The arresting sites in DNA have the property of trapping a certain fraction of elongating RNA polymerases that pass through, resulting in locked ternary complexes. Cleavage of the nascent transcript by cleavage factors such as GreA or GreB allows the resumption of elongation from the new 3'terminus. GreA releases sequences of 2 to 3 nucleotides. The polypeptide is Transcription elongation factor GreA (Anaeromyxobacter sp. (strain K)).